Here is a 461-residue protein sequence, read N- to C-terminus: Argininosuccinate lyase (461 aa).

The protein belongs to the lyase 1 family. Argininosuccinate lyase subfamily.

It is found in the cytoplasm. The catalysed reaction is 2-(N(omega)-L-arginino)succinate = fumarate + L-arginine. It functions in the pathway amino-acid biosynthesis; L-arginine biosynthesis; L-arginine from L-ornithine and carbamoyl phosphate: step 3/3. The polypeptide is Argininosuccinate lyase (Aeromonas salmonicida (strain A449)).